The sequence spans 369 residues: MGGFTKEAKKGYIEVAFNGSLASILLDTQFSVPAKGVTAIFGPPGCGKTTLARCIAGVQRLPNGFCAIDGEIWQDETTFRPPHLRRVAYVFQLPILSSHLSVRRTLLYNASNSEPTLIDFDGVVELLGLAPLLERTPSHLSKTERQRLALGSALLGQPRLLLLDDPLIVRDRSAKCEILPFLERILQSLALPMIYISHDITDIERLADHLVMMKDGTVTAAGPLNVTQSDPALASRSEAAICLDTMVGGYDGRYGLVKLRLKSARFLIPAVPLRPGARLRLRIAAGDVSIACEPPRASSILNVFRARITASLPHGDAEVTLVLTLETGHSGVPLLARITRRSFDALRLSIGAEVFAEELCGKLGDDGMR.

The ABC transporter domain occupies 10-240 (KGYIEVAFNG…PALASRSEAA (231 aa)). 42-49 (GPPGCGKT) contributes to the ATP binding site. Positions 297-367 (ASSILNVFRA…ELCGKLGDDG (71 aa)) constitute a Mop domain.

This sequence belongs to the ABC transporter superfamily. Molybdate importer (TC 3.A.1.8) family. As to quaternary structure, the complex is composed of two ATP-binding proteins (ModC), two transmembrane proteins (ModB) and a solute-binding protein (ModA).

It localises to the cell inner membrane. The catalysed reaction is molybdate(out) + ATP + H2O = molybdate(in) + ADP + phosphate + H(+). Part of the ABC transporter complex ModABC involved in molybdenum import. Responsible for energy coupling to the transport system. The polypeptide is Molybdenum import ATP-binding protein ModC 1 (Bradyrhizobium diazoefficiens (strain JCM 10833 / BCRC 13528 / IAM 13628 / NBRC 14792 / USDA 110)).